We begin with the raw amino-acid sequence, 212 residues long: Deoxyribose-phosphate aldolase (212 aa).

Asp-89 serves as the catalytic Proton donor/acceptor. The active-site Schiff-base intermediate with acetaldehyde is Lys-151. Catalysis depends on Lys-180, which acts as the Proton donor/acceptor.

It belongs to the DeoC/FbaB aldolase family. DeoC type 1 subfamily.

Its subcellular location is the cytoplasm. The enzyme catalyses 2-deoxy-D-ribose 5-phosphate = D-glyceraldehyde 3-phosphate + acetaldehyde. It functions in the pathway carbohydrate degradation; 2-deoxy-D-ribose 1-phosphate degradation; D-glyceraldehyde 3-phosphate and acetaldehyde from 2-deoxy-alpha-D-ribose 1-phosphate: step 2/2. In terms of biological role, catalyzes a reversible aldol reaction between acetaldehyde and D-glyceraldehyde 3-phosphate to generate 2-deoxy-D-ribose 5-phosphate. In Clostridium botulinum (strain ATCC 19397 / Type A), this protein is Deoxyribose-phosphate aldolase.